The sequence spans 528 residues: Ulvan lyase, short isoform (528 aa).

Residues 1 to 29 (MKINLSMRELVSRLSTTLKTAIALSVLTA) form the signal peptide. C30 carries the N-palmitoyl cysteine lipid modification. Residue C30 is the site of S-diacylglycerol cysteine attachment. Position 151–152 (151–152 (SH)) interacts with substrate. Residue H152 is the Proton donor/acceptor of the active site. Ca(2+) is bound by residues D218, D228, and K230. Residues Y309 and R326 each contribute to the substrate site. Ca(2+)-binding residues include N329, D332, and F334. H390 contacts substrate.

This sequence belongs to the polysaccharide lyase 24 family.

The protein resides in the secreted. It is found in the cell membrane. In terms of biological role, ulvan lyase involved in ulvan degradation. Ulvan is the main polysaccharide component of the Ulvales (green seaweed) cell wall. It is composed of disaccharide building blocks comprising 3-sulfated rhamnose (Rha3S) linked to D-glucuronic acid (GlcA), L-iduronic acid (IduA), or D-xylose (Xyl). Ulvan lyase catalyzes preferentially the endolytic cleavage of the glycosidic bond between Rha3S and the uronic acid GlcA, but not IduA, producing oligosaccharides that have unsaturated 4-deoxy-L-threo-hex-4-enopyranosiduronic acid (deltaUA) at the non-reducing end. The most abundant end products in the degradation of the ulvan polysaccharide were deltaUA-Rha3S disaccharides and deltaUA-Rha3S-IduA-Rha3S and deltaUA-Rha3S-Xyl-Rha3S tetrasaccharides. The chain is Ulvan lyase, short isoform from Alteromonas sp. (strain LOR).